The following is a 556-amino-acid chain: 2-succinyl-5-enolpyruvyl-6-hydroxy-3-cyclohexene-1-carboxylate synthase (556 aa).

The protein belongs to the TPP enzyme family. MenD subfamily. As to quaternary structure, homodimer. Requires Mg(2+) as cofactor. Mn(2+) is required as a cofactor. It depends on thiamine diphosphate as a cofactor.

It catalyses the reaction isochorismate + 2-oxoglutarate + H(+) = 5-enolpyruvoyl-6-hydroxy-2-succinyl-cyclohex-3-ene-1-carboxylate + CO2. The protein operates within quinol/quinone metabolism; 1,4-dihydroxy-2-naphthoate biosynthesis; 1,4-dihydroxy-2-naphthoate from chorismate: step 2/7. It participates in quinol/quinone metabolism; menaquinone biosynthesis. Catalyzes the thiamine diphosphate-dependent decarboxylation of 2-oxoglutarate and the subsequent addition of the resulting succinic semialdehyde-thiamine pyrophosphate anion to isochorismate to yield 2-succinyl-5-enolpyruvyl-6-hydroxy-3-cyclohexene-1-carboxylate (SEPHCHC). This is 2-succinyl-5-enolpyruvyl-6-hydroxy-3-cyclohexene-1-carboxylate synthase from Shigella flexneri serotype 5b (strain 8401).